The following is a 374-amino-acid chain: Chaperone protein DnaJ (374 aa).

The J domain occupies 5–70 (DYYDVLGVAK…DKRAAYDRFG (66 aa)). The CR-type zinc finger occupies 131 to 209 (GCEEKIRIPT…CHGQGRVQEY (79 aa)). The Zn(2+) site is built by cysteine 144, cysteine 147, cysteine 161, cysteine 164, cysteine 183, cysteine 186, cysteine 197, and cysteine 200. CXXCXGXG motif repeat units lie at residues 144–151 (CKTCDGSG), 161–168 (CGTCGGAG), 183–190 (CPECHGAG), and 197–204 (CRDCHGQG).

It belongs to the DnaJ family. Homodimer. Zn(2+) serves as cofactor.

Its subcellular location is the cytoplasm. Its function is as follows. Participates actively in the response to hyperosmotic and heat shock by preventing the aggregation of stress-denatured proteins and by disaggregating proteins, also in an autonomous, DnaK-independent fashion. Unfolded proteins bind initially to DnaJ; upon interaction with the DnaJ-bound protein, DnaK hydrolyzes its bound ATP, resulting in the formation of a stable complex. GrpE releases ADP from DnaK; ATP binding to DnaK triggers the release of the substrate protein, thus completing the reaction cycle. Several rounds of ATP-dependent interactions between DnaJ, DnaK and GrpE are required for fully efficient folding. Also involved, together with DnaK and GrpE, in the DNA replication of plasmids through activation of initiation proteins. This Marinomonas sp. (strain MWYL1) protein is Chaperone protein DnaJ.